A 190-amino-acid polypeptide reads, in one-letter code: 3-isopropylmalate dehydratase small subunit (190 aa).

The protein belongs to the LeuD family. LeuD type 1 subfamily. As to quaternary structure, heterodimer of LeuC and LeuD.

The enzyme catalyses (2R,3S)-3-isopropylmalate = (2S)-2-isopropylmalate. It functions in the pathway amino-acid biosynthesis; L-leucine biosynthesis; L-leucine from 3-methyl-2-oxobutanoate: step 2/4. Functionally, catalyzes the isomerization between 2-isopropylmalate and 3-isopropylmalate, via the formation of 2-isopropylmaleate. In Staphylococcus aureus (strain MRSA252), this protein is 3-isopropylmalate dehydratase small subunit.